A 488-amino-acid polypeptide reads, in one-letter code: 2,3-bisphosphoglycerate-independent phosphoglycerate mutase (488 aa).

The active-site Phosphoserine intermediate is serine 10. Serine 10 provides a ligand contact to Mn(2+). Substrate is bound by residues histidine 69, 99 to 100 (RD), arginine 135, arginine 142, 215 to 218 (RADR), and lysine 290. Aspartate 359, histidine 363, aspartate 400, histidine 401, and histidine 430 together coordinate Mn(2+).

Belongs to the BPG-independent phosphoglycerate mutase family. Monomer. Requires Mn(2+) as cofactor.

The protein localises to the cytoplasm. The enzyme catalyses (2R)-2-phosphoglycerate = (2R)-3-phosphoglycerate. The protein operates within carbohydrate degradation; glycolysis; pyruvate from D-glyceraldehyde 3-phosphate: step 3/5. Functionally, catalyzes the interconversion of 2-phosphoglycerate and 3-phosphoglycerate. The chain is 2,3-bisphosphoglycerate-independent phosphoglycerate mutase from Prunus dulcis (Almond).